A 211-amino-acid polypeptide reads, in one-letter code: ATP-dependent Clp protease proteolytic subunit (211 aa).

S114 acts as the Nucleophile in catalysis. H139 is an active-site residue.

The protein belongs to the peptidase S14 family. Fourteen ClpP subunits assemble into 2 heptameric rings which stack back to back to give a disk-like structure with a central cavity, resembling the structure of eukaryotic proteasomes.

Its subcellular location is the cytoplasm. It carries out the reaction Hydrolysis of proteins to small peptides in the presence of ATP and magnesium. alpha-casein is the usual test substrate. In the absence of ATP, only oligopeptides shorter than five residues are hydrolyzed (such as succinyl-Leu-Tyr-|-NHMec, and Leu-Tyr-Leu-|-Tyr-Trp, in which cleavage of the -Tyr-|-Leu- and -Tyr-|-Trp bonds also occurs).. Its function is as follows. Cleaves peptides in various proteins in a process that requires ATP hydrolysis. Has a chymotrypsin-like activity. Plays a major role in the degradation of misfolded proteins. This is ATP-dependent Clp protease proteolytic subunit from Pseudomonas fluorescens (strain SBW25).